A 347-amino-acid chain; its full sequence is QKQVTRGFTGGVQTVTLIPGDGIGPEISAAVMKIFDAAKAPIQWEERNVTAIQGPGGKWMIPSEAKESMDKNKMGLKGPLKTPIAAGHPSMNLLLRKTFDLYANVRPCVSIEGYKTPYTDVNIVTIRENTEGEYSGIEHVIVDGVVQSIKLITEGGSKRIAEFAFEYARNNHRSNVTAVHKANIMRMSDGLFLQKCREVAENCKDIKFNEMYLDTVCLNMVQDPSQFDVLVMPNLYGDILSDLCAGLIGGLGVTPSGNIGANGVAIFESVHGTAPDIAGKDMANPTALLLSAVMMLRHMGLFDHAARIEAACFATIKDGKSLTKDLGGNAKCSDFTEEICRRVKDLD.

Residues 1 to 8 (QKQVTRGF) constitute a mitochondrion transit peptide. Position 14-42 (14-42 (TVTLIPGDGIGPEISAAVMKIFDAAKAPI)) interacts with NAD(+). Position 58 is an N6-succinyllysine (Lys58). A Phosphothreonine modification is found at Thr82. Substrate-binding residues include Arg96, Arg106, and Arg127. Lys204 carries the post-translational modification N6-acetyllysine. Residues Asp214, Asp238, and Asp242 each coordinate Mg(2+). N6-acetyllysine; alternate is present on Lys324. Position 324 is an N6-succinyllysine; alternate (Lys324). Lys331 is modified (N6-succinyllysine).

This sequence belongs to the isocitrate and isopropylmalate dehydrogenases family. As to quaternary structure, heterooligomer of subunits alpha (IDH3A), beta (IDH3B), and gamma (IDH3G) in the apparent ratio of 2:1:1. The heterodimer containing one IDH3A and one IDH3B subunit and the heterodimer containing one IDH3A and one IDH3G subunit assemble into a heterotetramer (which contains two subunits of IDH3A, one of IDH3B and one of IDH3G) and further into the heterooctamer. It depends on Mg(2+) as a cofactor. Requires Mn(2+) as cofactor.

It localises to the mitochondrion. It carries out the reaction D-threo-isocitrate + NAD(+) = 2-oxoglutarate + CO2 + NADH. With respect to regulation, the heterotetramer and the heterodimer composed of IDH3A and IDH3G subunits can be allosterically activated by citrate (CIT) or/and ADP, and the two activators can act independently or synergistically. The heterodimer composed of IDH3A and IDH3B subunits cannot be allosterically regulated and the allosteric regulation of the heterotetramer is through the IDH3G subunit and not the IDH3B subunit. The IDH3G subunit contains the allosteric site which consists of a CIT-binding site and an ADP-binding site, and the binding of CIT and ADP causes conformational changes at the allosteric site which are transmitted to the active site in the catalytic subunit (IDH3A) through a cascade of conformational changes at the heterodimer interface, leading to stabilization of the isocitrate-binding at the active site and thus activation of the enzyme. ATP can activate the heterotetramer and the heterodimer composed of IDH3A and IDH3G subunits at low concentrations but inhibits their activities at high concentrations, whereas ATP exhibits only inhibitory effect on the heterodimer composed of IDH3A and IDH3B subunits. Its function is as follows. Catalytic subunit of the enzyme which catalyzes the decarboxylation of isocitrate (ICT) into alpha-ketoglutarate. The heterodimer composed of the alpha (IDH3A) and beta (IDH3B) subunits and the heterodimer composed of the alpha (IDH3A) and gamma (IDH3G) subunits, have considerable basal activity but the full activity of the heterotetramer (containing two subunits of IDH3A, one of IDH3B and one of IDH3G) requires the assembly and cooperative function of both heterodimers. In Macaca fascicularis (Crab-eating macaque), this protein is Isocitrate dehydrogenase [NAD] subunit alpha, mitochondrial (IDH3A).